The sequence spans 358 residues: Dynein axonemal assembly factor 10 (358 aa).

WD repeat units follow at residues 64 to 106, 116 to 155, 163 to 206, 208 to 250, 258 to 298, and 320 to 358; these read EKSK…SPVY, NAIDGVGGLGIGDGAPEIVTGSRDGTVKVWDSRQKDTPVV, ETKR…LRWE, NIRN…PSKG, AHKS…QRSK, and LSTQPISSLDWSPDKQGLCVCSSFDQSVRVLIVTKLNTV.

Interacts with PIH1D1; the interaction associates DNAAF10 with the R2TP complex. Interacts with several dynein axonemal assembly factors.

It localises to the dynein axonemal particle. Its function is as follows. Key assembly factor specifically required for the stability of axonemal dynein heavy chains in cytoplasm. The sequence is that of Dynein axonemal assembly factor 10 (dnaaf10) from Danio rerio (Zebrafish).